A 321-amino-acid polypeptide reads, in one-letter code: MAAALRALDPAPARLAVAVSGGADSAMLAVAAAAALPPGCTLRLFHVHHGLQAAADQWAAQVRGLGALLGVPVDEARVTVPPGQGLGMEAAARLARYQALAGLARQHGVRHILLAHHRNDQAETVLLRLLRGTGLQGMAAMAPFSERDGVAYLRPWLDVDHAAILALAGAVRAQCGWQAVQDPTNTDPRYARAAVRTQLAPALDARWPGWQAIVARHARQMAEAAEIVAEVAQADFATLEPADAGRSFSLAAWRGLSAARQAQALRHWLASQDAPMPTEARLAELQRQLRQLHALGHDRHLRWQHAGRVVRCERGRVWIDD.

Position 20-25 (20-25 (SGGADS)) interacts with ATP.

This sequence belongs to the tRNA(Ile)-lysidine synthase family.

It localises to the cytoplasm. It catalyses the reaction cytidine(34) in tRNA(Ile2) + L-lysine + ATP = lysidine(34) in tRNA(Ile2) + AMP + diphosphate + H(+). Functionally, ligates lysine onto the cytidine present at position 34 of the AUA codon-specific tRNA(Ile) that contains the anticodon CAU, in an ATP-dependent manner. Cytidine is converted to lysidine, thus changing the amino acid specificity of the tRNA from methionine to isoleucine. This is tRNA(Ile)-lysidine synthase from Bordetella pertussis (strain Tohama I / ATCC BAA-589 / NCTC 13251).